We begin with the raw amino-acid sequence, 156 residues long: MNLNLTLIGQAIAFAVFVWFCMKFVWPPVMQALQERQKKIADGLDAASRATRDLELAQEQAAEQLKESKEQAAQIIEQAHKRANQMIEEARDNARLEGERMIESARGEIEQETQRAKEELRTQVAALAIQGAERILDSSIDEAKHRELVDKLAAEL.

Residues 5-25 form a helical membrane-spanning segment; sequence LTLIGQAIAFAVFVWFCMKFV.

This sequence belongs to the ATPase B chain family. In terms of assembly, F-type ATPases have 2 components, F(1) - the catalytic core - and F(0) - the membrane proton channel. F(1) has five subunits: alpha(3), beta(3), gamma(1), delta(1), epsilon(1). F(0) has three main subunits: a(1), b(2) and c(10-14). The alpha and beta chains form an alternating ring which encloses part of the gamma chain. F(1) is attached to F(0) by a central stalk formed by the gamma and epsilon chains, while a peripheral stalk is formed by the delta and b chains.

Its subcellular location is the cell inner membrane. F(1)F(0) ATP synthase produces ATP from ADP in the presence of a proton or sodium gradient. F-type ATPases consist of two structural domains, F(1) containing the extramembraneous catalytic core and F(0) containing the membrane proton channel, linked together by a central stalk and a peripheral stalk. During catalysis, ATP synthesis in the catalytic domain of F(1) is coupled via a rotary mechanism of the central stalk subunits to proton translocation. In terms of biological role, component of the F(0) channel, it forms part of the peripheral stalk, linking F(1) to F(0). This chain is ATP synthase subunit b, found in Chromohalobacter salexigens (strain ATCC BAA-138 / DSM 3043 / CIP 106854 / NCIMB 13768 / 1H11).